Reading from the N-terminus, the 431-residue chain is MPVRLDRSSADFDQRFAAFLAAKREVSADVEAAARAIVDDVARRGDAALLEATAKFDRLTLDASGLRVSAAEIEAAVKACDAATLDALSLARDRIETYHRRQLPKDERFTDPLGVELGWRYTAIESAGLYVPGGTAAYPSSVLMNAVPAKVAGVSRLVMVVPSPDGKLNPLVLAAARLGGVTEIYRVGGAQAVAALAHGTATIAPVAKIVGPGNAYVAAAKRLVFGKVGIDMIAGPSEVLVIADDTGNADWIAADLLAQAEHDTSAQSILITDSARLAADVEKAVEAQLKTLPRTAIASASWADFGAIIMVKNLNDAIPLADAIAAEHLEIMTTDPDALAARIRNAGAVFLGAHTPEAIGDYVGGSNHVLPTARSARFSSGLSVHDFMKRTSILKCGPDQLRALGPAAMTLGKAEGLDAHSRSIGLRLNLS.

NAD(+) is bound by residues Y130, Q191, and N214. The substrate site is built by S237, Q259, and H262. Zn(2+) contacts are provided by Q259 and H262. Active-site proton acceptor residues include E327 and H328. Residues H328, D361, E415, and H420 each coordinate substrate. D361 is a binding site for Zn(2+). H420 is a binding site for Zn(2+).

It belongs to the histidinol dehydrogenase family. Requires Zn(2+) as cofactor.

It carries out the reaction L-histidinol + 2 NAD(+) + H2O = L-histidine + 2 NADH + 3 H(+). Its pathway is amino-acid biosynthesis; L-histidine biosynthesis; L-histidine from 5-phospho-alpha-D-ribose 1-diphosphate: step 9/9. Functionally, catalyzes the sequential NAD-dependent oxidations of L-histidinol to L-histidinaldehyde and then to L-histidine. This is Histidinol dehydrogenase from Bradyrhizobium diazoefficiens (strain JCM 10833 / BCRC 13528 / IAM 13628 / NBRC 14792 / USDA 110).